We begin with the raw amino-acid sequence, 347 residues long: Anthranilate phosphoribosyltransferase (347 aa).

5-phospho-alpha-D-ribose 1-diphosphate is bound by residues G86, 89–90 (GD), T94, 96–99 (NIST), 114–122 (KHGNRSVSS), and S126. Residue G86 coordinates anthranilate. S98 contacts Mg(2+). N117 is an anthranilate binding site. R172 contributes to the anthranilate binding site. Mg(2+)-binding residues include D230 and E231.

Belongs to the anthranilate phosphoribosyltransferase family. As to quaternary structure, homodimer. The cofactor is Mg(2+).

It carries out the reaction N-(5-phospho-beta-D-ribosyl)anthranilate + diphosphate = 5-phospho-alpha-D-ribose 1-diphosphate + anthranilate. It functions in the pathway amino-acid biosynthesis; L-tryptophan biosynthesis; L-tryptophan from chorismate: step 2/5. In terms of biological role, catalyzes the transfer of the phosphoribosyl group of 5-phosphorylribose-1-pyrophosphate (PRPP) to anthranilate to yield N-(5'-phosphoribosyl)-anthranilate (PRA). This is Anthranilate phosphoribosyltransferase from Shewanella frigidimarina (strain NCIMB 400).